Consider the following 481-residue polypeptide: Chromosomal replication initiator protein DnaA (481 aa).

The domain I, interacts with DnaA modulators stretch occupies residues 1-71; that stretch reads MTDLSAFWPQ…ETFAEDILGR (71 aa). The domain II stretch occupies residues 71–143; sequence RPVTIELRIG…PAIGGGHEST (73 aa). Positions 86 to 96 are enriched in low complexity; it reads ASAPAAASPRS. Residues 86 to 110 form a disordered region; that stretch reads ASAPAAASPRSPGRPAPAPVAATPT. Residues 144-361 are domain III, AAA+ region; that stretch reads RLNPAFTFES…GALKRVVAYS (218 aa). ATP-binding residues include Gly189, Gly191, Lys192, and Thr193. The interval 362–481 is domain IV, binds dsDNA; the sequence is RFSNQPISLD…YAALQQMLRN (120 aa).

It belongs to the DnaA family. As to quaternary structure, oligomerizes as a right-handed, spiral filament on DNA at oriC.

It is found in the cytoplasm. Functionally, plays an essential role in the initiation and regulation of chromosomal replication. ATP-DnaA binds to the origin of replication (oriC) to initiate formation of the DNA replication initiation complex once per cell cycle. Binds the DnaA box (a 9 base pair repeat at the origin) and separates the double-stranded (ds)DNA. Forms a right-handed helical filament on oriC DNA; dsDNA binds to the exterior of the filament while single-stranded (ss)DNA is stabiized in the filament's interior. The ATP-DnaA-oriC complex binds and stabilizes one strand of the AT-rich DNA unwinding element (DUE), permitting loading of DNA polymerase. After initiation quickly degrades to an ADP-DnaA complex that is not apt for DNA replication. Binds acidic phospholipids. In Laribacter hongkongensis (strain HLHK9), this protein is Chromosomal replication initiator protein DnaA.